The chain runs to 387 residues: Protein RecA (387 aa).

Residue 80-87 participates in ATP binding; that stretch reads GPESSGKT. A disordered region spans residues 348–387; the sequence is LDDSEVAETEEETTASKTKAKAKKEEKAVETEEIELELED. Composition is skewed to acidic residues over residues 349 to 360 and 378 to 387; these read DDSEVAETEEET and TEEIELELED.

Belongs to the RecA family.

It is found in the cytoplasm. In terms of biological role, can catalyze the hydrolysis of ATP in the presence of single-stranded DNA, the ATP-dependent uptake of single-stranded DNA by duplex DNA, and the ATP-dependent hybridization of homologous single-stranded DNAs. It interacts with LexA causing its activation and leading to its autocatalytic cleavage. This Lactococcus lactis subsp. cremoris (strain MG1363) protein is Protein RecA.